The sequence spans 370 residues: Protein maelstrom 2 (370 aa).

A DNA-binding region (HMG box) is located at residues 2–68 (AQNKPNAFMA…VLERESKTER (67 aa)).

It belongs to the maelstrom family.

It localises to the cytoplasm. The protein localises to the nucleus. Functionally, involved both in the piRNA and miRNA metabolic processes. As a component of the meiotic nuage, plays a central role during oogenesis by repressing transposable elements and preventing their mobilization, which is essential for the germline integrity. Repression of transposable elements is mediated via the piRNA metabolic process, which mediates the repression of transposable elements during meiosis by forming complexes composed of piRNAs and Piwi proteins and governs the repression of transposons. As a nuclear component, it is required for proper differentiation in the germline stem cell (GSC) lineage by repressing microRNA-7 (miR-7), thereby acting as an indirect regulator of bag-of-marbles (Bam). Acts by binding to the promoter of miR-7 gene and repressing its expression; miR-7 repression alleviates the Bam repression by miR-7, thereby allowing differentiation in the germline stem cell (GSC) lineage. The sequence is that of Protein maelstrom 2 (mael2) from Drosophila pseudoobscura pseudoobscura (Fruit fly).